The following is a 426-amino-acid chain: 3-phosphoshikimate 1-carboxyvinyltransferase (426 aa).

3-phosphoshikimate is bound by residues K22, S23, and R27. K22 is a phosphoenolpyruvate binding site. Positions 96 and 124 each coordinate phosphoenolpyruvate. Residues S170, S171, Q172, S198, D314, N337, and K341 each coordinate 3-phosphoshikimate. Q172 serves as a coordination point for phosphoenolpyruvate. The active-site Proton acceptor is the D314. Residues R345, R387, and K412 each coordinate phosphoenolpyruvate.

The protein belongs to the EPSP synthase family. Monomer.

It is found in the cytoplasm. The catalysed reaction is 3-phosphoshikimate + phosphoenolpyruvate = 5-O-(1-carboxyvinyl)-3-phosphoshikimate + phosphate. It participates in metabolic intermediate biosynthesis; chorismate biosynthesis; chorismate from D-erythrose 4-phosphate and phosphoenolpyruvate: step 6/7. Its function is as follows. Catalyzes the transfer of the enolpyruvyl moiety of phosphoenolpyruvate (PEP) to the 5-hydroxyl of shikimate-3-phosphate (S3P) to produce enolpyruvyl shikimate-3-phosphate and inorganic phosphate. This Shewanella sp. (strain MR-7) protein is 3-phosphoshikimate 1-carboxyvinyltransferase.